A 1942-amino-acid chain; its full sequence is Probable helicase with zinc finger domain (1942 aa).

The segment at 178–206 adopts a C3H1-type zinc-finger fold; the sequence is SEEYTLCKRFLEQGICRYGAQCTSAHSQE. The residue at position 248 (Ser-248) is a Phosphoserine. 668 to 675 contributes to the ATP binding site; sequence GPYGTGKT. Residues 794 to 797 carry the DEAA box motif; that stretch reads DEAA. Over residues 1117-1127 the composition is skewed to polar residues; sequence SGSTNKQQQSP. Positions 1117–1141 are disordered; sequence SGSTNKQQQSPPKGKSLHHTQNDHF. Residue Thr-1163 is modified to Phosphothreonine. An Omega-N-methylarginine modification is found at Arg-1245. Disordered stretches follow at residues 1246–1345, 1386–1429, 1527–1552, and 1608–1637; these read GSPI…INLP, NLPE…GPNN, QGSAPYPHHHHPHLQHLPQPPLGLHQ, and RQVQSRSPPAVPSPPSSTDHSSHFSNFNDN. 2 stretches are compositionally biased toward basic and acidic residues: residues 1268 to 1281 and 1292 to 1308; these read HQEKDQHEQNRNGK and NKIRTPEKKPTEPKQVD. The segment covering 1399–1412 has biased composition (low complexity); it reads NQVVQQQSQLNQQP. A Phosphoserine modification is found at Ser-1614. Low complexity predominate over residues 1623-1636; the sequence is SSTDHSSHFSNFND. Ser-1645, Ser-1738, Ser-1741, and Ser-1766 each carry phosphoserine. Disordered regions lie at residues 1729–1779, 1792–1843, and 1870–1942; these read FHPL…TPQD, NQSS…PEDQ, and MPNK…SYFK. Positions 1731–1745 are enriched in low complexity; that stretch reads PLSSRTVSSSSLPSL. Polar residues-rich tracts occupy residues 1761-1779 and 1792-1825; these read RISSSSVQPCSEEVSTPQD and NQSSFNFSSPESWVNTTSSTPYQNIPCNGSSRTA. Composition is skewed to low complexity over residues 1876 to 1888 and 1920 to 1942; these read AESANSSSPQSSA and LSLFQELSLGSSSGSNGFYSYFK.

The protein belongs to the DNA2/NAM7 helicase family. As to quaternary structure, interacts with SMYD2. Interacts with POLR2A. Interacts with SMYD3; the interaction may bridge SMYD3 and RNA polymerase II. Expressed predominantly in thymus and brain. Expression is down-regulated in 28 of 95 tested cancer cell lines.

The protein resides in the nucleus. In terms of biological role, may act as a helicase that plays a role in RNA metabolism in multiple tissues and organs within the developing embryo. The sequence is that of Probable helicase with zinc finger domain (HELZ) from Homo sapiens (Human).